A 355-amino-acid polypeptide reads, in one-letter code: Heat-inducible transcription repressor HrcA (355 aa).

It belongs to the HrcA family.

Its function is as follows. Negative regulator of class I heat shock genes (grpE-dnaK-dnaJ and groELS operons). Prevents heat-shock induction of these operons. This chain is Heat-inducible transcription repressor HrcA, found in Nitratidesulfovibrio vulgaris (strain DP4) (Desulfovibrio vulgaris).